A 396-amino-acid polypeptide reads, in one-letter code: Large ribosomal subunit protein uL24m (396 aa).

Residues 374–396 form a disordered region; that stretch reads QLSLGGGQEDAATTTSPEQPKVV. The span at 384-396 shows a compositional bias: polar residues; that stretch reads AATTTSPEQPKVV.

It belongs to the universal ribosomal protein uL24 family. Component of the mitochondrial large ribosomal subunit (mt-LSU). Mature N.crassa 74S mitochondrial ribosomes consist of a small (37S) and a large (54S) subunit. The 37S small subunit contains a 16S ribosomal RNA (16S mt-rRNA) and 32 different proteins. The 54S large subunit contains a 23S rRNA (23S mt-rRNA) and 42 different proteins. uL24m forms the wall of the exit tunnel.

The protein resides in the mitochondrion. Functionally, component of the mitochondrial ribosome (mitoribosome), a dedicated translation machinery responsible for the synthesis of mitochondrial genome-encoded proteins, including at least some of the essential transmembrane subunits of the mitochondrial respiratory chain. The mitoribosomes are attached to the mitochondrial inner membrane and translation products are cotranslationally integrated into the membrane. This is Large ribosomal subunit protein uL24m (mrpl40) from Neurospora crassa (strain ATCC 24698 / 74-OR23-1A / CBS 708.71 / DSM 1257 / FGSC 987).